A 637-amino-acid polypeptide reads, in one-letter code: Pentatricopeptide repeat-containing protein At1g12300, mitochondrial (637 aa).

A mitochondrion-targeting transit peptide spans 1–95; it reads MVKLMIRRLS…PTVIDFSRLF (95 aa). 15 PPR repeats span residues 87-121, 122-156, 157-191, 192-226, 227-261, 262-296, 297-331, 332-366, 367-401, 402-436, 437-471, 472-506, 507-541, 542-576, and 577-611; these read TVID…GIAH, NLYT…GYEP, NTIT…GHKP, DLIT…GCQP, NAVT…NIKL, DAVK…GITT, NIIT…KINP, NVVT…GIAP, DTIT…GCDP, NIRT…GVVA, DTVT…KVPP, NIVT…KMEL, DIGI…GVKP, GVKT…GHAP, and DGWT…GFSV.

It belongs to the PPR family. P subfamily.

The protein localises to the mitochondrion. This Arabidopsis thaliana (Mouse-ear cress) protein is Pentatricopeptide repeat-containing protein At1g12300, mitochondrial.